We begin with the raw amino-acid sequence, 466 residues long: L-seryl-tRNA(Sec) selenium transferase (466 aa).

N6-(pyridoxal phosphate)lysine is present on Lys293.

The protein belongs to the SelA family. The cofactor is pyridoxal 5'-phosphate.

The protein localises to the cytoplasm. It catalyses the reaction L-seryl-tRNA(Sec) + selenophosphate + H(+) = L-selenocysteinyl-tRNA(Sec) + phosphate. The protein operates within aminoacyl-tRNA biosynthesis; selenocysteinyl-tRNA(Sec) biosynthesis; selenocysteinyl-tRNA(Sec) from L-seryl-tRNA(Sec) (bacterial route): step 1/1. Converts seryl-tRNA(Sec) to selenocysteinyl-tRNA(Sec) required for selenoprotein biosynthesis. This chain is L-seryl-tRNA(Sec) selenium transferase, found in Desulfotalea psychrophila (strain LSv54 / DSM 12343).